The primary structure comprises 207 residues: Superoxide dismutase [Mn] (207 aa).

Mn(2+) contacts are provided by His-28, His-76, Asp-160, and His-164.

Belongs to the iron/manganese superoxide dismutase family. In terms of assembly, homotetramer. Mn(2+) is required as a cofactor.

The protein localises to the secreted. It catalyses the reaction 2 superoxide + 2 H(+) = H2O2 + O2. Destroys superoxide anion radicals which are normally produced within the cells and which are toxic to biological systems. The protein is Superoxide dismutase [Mn] (sodA) of Mycolicibacterium smegmatis (Mycobacterium smegmatis).